A 122-amino-acid polypeptide reads, in one-letter code: Small ribosomal subunit protein uS13 (122 aa).

The tract at residues Lys94–Lys122 is disordered.

It belongs to the universal ribosomal protein uS13 family. As to quaternary structure, part of the 30S ribosomal subunit. Forms a loose heterodimer with protein S19. Forms two bridges to the 50S subunit in the 70S ribosome.

Its function is as follows. Located at the top of the head of the 30S subunit, it contacts several helices of the 16S rRNA. In the 70S ribosome it contacts the 23S rRNA (bridge B1a) and protein L5 of the 50S subunit (bridge B1b), connecting the 2 subunits; these bridges are implicated in subunit movement. Contacts the tRNAs in the A and P-sites. This Hyphomonas neptunium (strain ATCC 15444) protein is Small ribosomal subunit protein uS13.